Reading from the N-terminus, the 1585-residue chain is Sterol 3-beta-glucosyltransferase (1585 aa).

A compositionally biased stretch (pro residues) spans 1-18 (MSPPISPTPPPLQPPFPP). 3 disordered regions span residues 1-154 (MSPP…CDFR), 177-225 (PWEE…PTHT), and 249-279 (YQYA…LPKG). 3 stretches are compositionally biased toward polar residues: residues 65–77 (DQAT…SLIP), 105–123 (DAQT…STHE), and 132–148 (PRTS…QMAE). Acidic residues predominate over residues 178–194 (WEEDDDSDDGEDDDEFI). The segment covering 255-273 (ETSSRRTSAAGSESSSEGE) has biased composition (low complexity). Residues 387–555 (ERLMEVFGLE…EAIVDVEKSP (169 aa)) enclose the GRAM 1 domain. The region spanning 438–530 (LLVKSGPLHK…WVKAIQKVMF (93 aa)) is the PH domain. Disordered regions lie at residues 625-645 (TSHA…LGMA) and 666-852 (DGEP…GSES). Residues 670-689 (LEEHSQGPHHNDEDASHLPH) are compositionally biased toward basic and acidic residues. 3 stretches are compositionally biased toward polar residues: residues 760 to 785 (TDSS…QASV), 806 to 817 (NKPSVVDSNSAE), and 827 to 840 (SWTS…QMVK). The GRAM 2 domain occupies 862–933 (RKFRTFFALS…RDLYGLKAQK (72 aa)). The UDP-alpha-D-glucose site is built by S1043, R1044, D1046, I1358, H1360, H1373, G1377, T1378, D1397, and Q1398. Positions 1499-1555 (NRVRSRSRSRSRSSQGRFSPRRHTVDDDGWSVVSGGSRSRSGSASAVTSPERRPLNI) are disordered. Positions 1529 to 1545 (SVVSGGSRSRSGSASAV) are enriched in low complexity.

The protein belongs to the glycosyltransferase 28 family.

The protein resides in the cytoplasm. Its subcellular location is the membrane. The enzyme catalyses a sterol + UDP-alpha-D-glucose = a sterol 3-beta-D-glucoside + UDP + H(+). It carries out the reaction ergosterol + UDP-alpha-D-glucose = ergosteryl 3-beta-D-glucoside + UDP + H(+). Its function is as follows. Sterol glycosyltransferase responsible for the glycosylation of ergosterol to form ergosterol-glucoside. The protein is Sterol 3-beta-glucosyltransferase of Cryptococcus neoformans var. neoformans serotype D (strain JEC21 / ATCC MYA-565) (Filobasidiella neoformans).